The chain runs to 139 residues: D-ribose pyranase (139 aa).

Residue histidine 20 is the Proton donor of the active site. Substrate is bound by residues aspartate 28, histidine 106, and 128 to 130 (YAN).

It belongs to the RbsD / FucU family. RbsD subfamily. As to quaternary structure, homodecamer.

It is found in the cytoplasm. It carries out the reaction beta-D-ribopyranose = beta-D-ribofuranose. The protein operates within carbohydrate metabolism; D-ribose degradation; D-ribose 5-phosphate from beta-D-ribopyranose: step 1/2. In terms of biological role, catalyzes the interconversion of beta-pyran and beta-furan forms of D-ribose. This is D-ribose pyranase from Shewanella halifaxensis (strain HAW-EB4).